The following is a 409-amino-acid chain: Tryptophan synthase beta chain (409 aa).

Lys-95 bears the N6-(pyridoxal phosphate)lysine mark.

Belongs to the TrpB family. As to quaternary structure, tetramer of two alpha and two beta chains. Pyridoxal 5'-phosphate serves as cofactor.

It catalyses the reaction (1S,2R)-1-C-(indol-3-yl)glycerol 3-phosphate + L-serine = D-glyceraldehyde 3-phosphate + L-tryptophan + H2O. It participates in amino-acid biosynthesis; L-tryptophan biosynthesis; L-tryptophan from chorismate: step 5/5. Its function is as follows. The beta subunit is responsible for the synthesis of L-tryptophan from indole and L-serine. In Pseudomonas syringae pv. syringae (strain B728a), this protein is Tryptophan synthase beta chain.